A 284-amino-acid chain; its full sequence is Pantothenate synthetase (284 aa).

Position 30 to 37 (30 to 37 (MGNLHNAH)) interacts with ATP. His-37 functions as the Proton donor in the catalytic mechanism. Position 61 (Gln-61) interacts with (R)-pantoate. Beta-alanine is bound at residue Gln-61. 149–152 (GIKD) contributes to the ATP binding site. Gln-155 provides a ligand contact to (R)-pantoate. ATP contacts are provided by residues Val-178 and 186-189 (MSSR).

It belongs to the pantothenate synthetase family. In terms of assembly, homodimer.

The protein resides in the cytoplasm. The catalysed reaction is (R)-pantoate + beta-alanine + ATP = (R)-pantothenate + AMP + diphosphate + H(+). Its pathway is cofactor biosynthesis; (R)-pantothenate biosynthesis; (R)-pantothenate from (R)-pantoate and beta-alanine: step 1/1. Functionally, catalyzes the condensation of pantoate with beta-alanine in an ATP-dependent reaction via a pantoyl-adenylate intermediate. The sequence is that of Pantothenate synthetase from Saccharophagus degradans (strain 2-40 / ATCC 43961 / DSM 17024).